Consider the following 282-residue polypeptide: ATP phosphoribosyltransferase (282 aa).

Belongs to the ATP phosphoribosyltransferase family. Long subfamily. It depends on Mg(2+) as a cofactor.

It localises to the cytoplasm. It catalyses the reaction 1-(5-phospho-beta-D-ribosyl)-ATP + diphosphate = 5-phospho-alpha-D-ribose 1-diphosphate + ATP. It participates in amino-acid biosynthesis; L-histidine biosynthesis; L-histidine from 5-phospho-alpha-D-ribose 1-diphosphate: step 1/9. With respect to regulation, feedback inhibited by histidine. Its function is as follows. Catalyzes the condensation of ATP and 5-phosphoribose 1-diphosphate to form N'-(5'-phosphoribosyl)-ATP (PR-ATP). Has a crucial role in the pathway because the rate of histidine biosynthesis seems to be controlled primarily by regulation of HisG enzymatic activity. This chain is ATP phosphoribosyltransferase, found in Halobacterium salinarum (strain ATCC 29341 / DSM 671 / R1).